We begin with the raw amino-acid sequence, 184 residues long: Adenine phosphoribosyltransferase (184 aa).

The protein belongs to the purine/pyrimidine phosphoribosyltransferase family. As to quaternary structure, homodimer.

The protein resides in the cytoplasm. The catalysed reaction is AMP + diphosphate = 5-phospho-alpha-D-ribose 1-diphosphate + adenine. It functions in the pathway purine metabolism; AMP biosynthesis via salvage pathway; AMP from adenine: step 1/1. Its function is as follows. Catalyzes a salvage reaction resulting in the formation of AMP, that is energically less costly than de novo synthesis. This is Adenine phosphoribosyltransferase from Shewanella baltica (strain OS223).